The primary structure comprises 147 residues: UPF0178 protein VP2328 (147 aa).

It belongs to the UPF0178 family.

The chain is UPF0178 protein VP2328 from Vibrio parahaemolyticus serotype O3:K6 (strain RIMD 2210633).